Here is a 319-residue protein sequence, read N- to C-terminus: tRNA dimethylallyltransferase (319 aa).

Residue 15–22 participates in ATP binding; the sequence is GPTASGKS. 17–22 lines the substrate pocket; sequence TASGKS. Interaction with substrate tRNA regions lie at residues 40–43 and 164–168; these read DSRQ and QRLVR.

Belongs to the IPP transferase family. As to quaternary structure, monomer. It depends on Mg(2+) as a cofactor.

The catalysed reaction is adenosine(37) in tRNA + dimethylallyl diphosphate = N(6)-dimethylallyladenosine(37) in tRNA + diphosphate. Functionally, catalyzes the transfer of a dimethylallyl group onto the adenine at position 37 in tRNAs that read codons beginning with uridine, leading to the formation of N6-(dimethylallyl)adenosine (i(6)A). In Chlorobium phaeobacteroides (strain DSM 266 / SMG 266 / 2430), this protein is tRNA dimethylallyltransferase.